Reading from the N-terminus, the 568-residue chain is MRASQFFISTLKEAPADADITSQKLMIRAGFIRKQAAGIYSWMPMGLRVVRKVETIIREEMNRAGGIEVSLPVVQPAELWQETGRWDAMGAELLRFKDRHERDFALQPTAEEVITDIARRELRSYRALPKNFYQIQTKFRDERRPRFGVMRGREFTMKDAYSFDRSAEDAGKSYDNMYAAYRRIFDRLGLTYRAVAADTGAIGGDRSHEFQVIADTGEDAIVYCPTSEYAANIELAEAVAPAGERPAASAALAKVHTPKVKTIAELVDFLKIDIKQTVKAVVVEGEQDEAVLMLVRGDHELNEVKAQKVAGIKNPLAFASPAAIRDAFGANPGSLGPVGFKGRVIADRTVAKMADFVIGANEDDQHYTGANFGRDCAEPEVFDIRNVVEGDPSPDGQGALAIQRGIEVGHVFYLGTKYSAAMNATFLDEDGKPKPFEMGCYGIGVTRILGAAIEQNYDDKGMIWPDSIAPFAVVVCPVGYDRSEAVKEAADKLYADLQARGVDVMLDDRGERPGAMFADWELIGAPHRVTIGDRGLKEGKVEYQHRRDSEATAVAADAILEHVLSKLA.

Belongs to the class-II aminoacyl-tRNA synthetase family. ProS type 1 subfamily. In terms of assembly, homodimer.

Its subcellular location is the cytoplasm. It carries out the reaction tRNA(Pro) + L-proline + ATP = L-prolyl-tRNA(Pro) + AMP + diphosphate. Its function is as follows. Catalyzes the attachment of proline to tRNA(Pro) in a two-step reaction: proline is first activated by ATP to form Pro-AMP and then transferred to the acceptor end of tRNA(Pro). As ProRS can inadvertently accommodate and process non-cognate amino acids such as alanine and cysteine, to avoid such errors it has two additional distinct editing activities against alanine. One activity is designated as 'pretransfer' editing and involves the tRNA(Pro)-independent hydrolysis of activated Ala-AMP. The other activity is designated 'posttransfer' editing and involves deacylation of mischarged Ala-tRNA(Pro). The misacylated Cys-tRNA(Pro) is not edited by ProRS. The sequence is that of Proline--tRNA ligase from Chromobacterium violaceum (strain ATCC 12472 / DSM 30191 / JCM 1249 / CCUG 213 / NBRC 12614 / NCIMB 9131 / NCTC 9757 / MK).